We begin with the raw amino-acid sequence, 240 residues long: Probable phosphatase Pcar_2586 (240 aa).

Histidine 12, histidine 14, histidine 20, histidine 45, glutamate 78, histidine 105, histidine 136, aspartate 197, and histidine 199 together coordinate Zn(2+).

This sequence belongs to the PHP family. It depends on Zn(2+) as a cofactor.

This is Probable phosphatase Pcar_2586 from Syntrophotalea carbinolica (strain DSM 2380 / NBRC 103641 / GraBd1) (Pelobacter carbinolicus).